The primary structure comprises 590 residues: DNA primase (590 aa).

Residues 37-61 (CPFHKEKTPSFSVSPTKQFYHCFSC) form a CHC2-type zinc finger. One can recognise a Toprim domain in the interval 255–337 (GRILVVEGYM…DKSLHFLFLP (83 aa)). 3 residues coordinate Mg(2+): E261, D305, and D307.

It belongs to the DnaG primase family. As to quaternary structure, monomer. Interacts with DnaB. Zn(2+) serves as cofactor. The cofactor is Mg(2+).

The catalysed reaction is ssDNA + n NTP = ssDNA/pppN(pN)n-1 hybrid + (n-1) diphosphate.. In terms of biological role, RNA polymerase that catalyzes the synthesis of short RNA molecules used as primers for DNA polymerase during DNA replication. The chain is DNA primase from Neisseria meningitidis serogroup B (strain ATCC BAA-335 / MC58).